Consider the following 652-residue polypeptide: uncharacterized protein (652 aa).

2 stretches are compositionally biased toward basic and acidic residues: residues 1 to 13 (MSVT…TERK) and 641 to 652 (ATERTDNLADAA). Disordered regions lie at residues 1–21 (MSVT…PAKT) and 628–652 (VPGW…ADAA).

The protein belongs to the ParB family.

This is an uncharacterized protein from Escherichia coli O157:H7.